The following is a 1368-amino-acid chain: DNA-directed RNA polymerase subunit beta (1368 aa).

Belongs to the RNA polymerase beta chain family. The RNAP catalytic core consists of 2 alpha, 1 beta, 1 beta' and 1 omega subunit. When a sigma factor is associated with the core the holoenzyme is formed, which can initiate transcription.

The enzyme catalyses RNA(n) + a ribonucleoside 5'-triphosphate = RNA(n+1) + diphosphate. In terms of biological role, DNA-dependent RNA polymerase catalyzes the transcription of DNA into RNA using the four ribonucleoside triphosphates as substrates. This chain is DNA-directed RNA polymerase subunit beta, found in Herminiimonas arsenicoxydans.